A 1479-amino-acid chain; its full sequence is Peroxidasin homolog (1479 aa).

Positions 1-26 are cleaved as a signal peptide; the sequence is MAKRSRGPGRRCLLALVLFCAWGTLA. An LRRNT domain is found at 27–63; sequence VVAQKPGAGCPSRCLCFRTTVRCMHLLLEAVPAVAPQ. Disulfide bonds link cysteine 36-cysteine 42 and cysteine 40-cysteine 49. LRR repeat units follow at residues 61-84, 85-108, 110-132, 133-156, 157-180, and 182-204; these read APQT…AFRR, LRNL…AFED, ENLK…AFKG, LASL…SFQH, LPKL…TFNH, and ESMK…LWLA. The 53-residue stretch at 192 to 244 folds into the LRRCT domain; sequence NTLHCDCEILWLADLLKTYAESGNAQAAAICEYPRRIQGRSVATITPEELNCE. 6 disulfides stabilise this stretch: cysteine 196-cysteine 243, cysteine 198-cysteine 222, cysteine 267-cysteine 317, cysteine 363-cysteine 412, cysteine 454-cysteine 502, and cysteine 546-cysteine 594. Ig-like C2-type domains lie at 246 to 332, 342 to 428, 433 to 520, and 521 to 610; these read PRIT…QEVT, PTFV…AFII, PQFT…LTVQ, and PRVT…MVLS. 4 N-linked (GlcNAc...) asparagine glycosylation sites follow: asparagine 640, asparagine 699, asparagine 719, and asparagine 731. Cystine bridges form between cysteine 723/cysteine 885, cysteine 732/cysteine 748, cysteine 847/cysteine 857, and cysteine 851/cysteine 875. Residue aspartate 826 coordinates heme b. Histidine 827 (proton acceptor) is an active-site residue. Position 828 (aspartate 828) interacts with Ca(2+). Asparagine 865 carries N-linked (GlcNAc...) asparagine glycosylation. Residues threonine 907, tyrosine 909, aspartate 911, and serine 913 each contribute to the Ca(2+) site. A disulfide bridge links cysteine 959 with cysteine 970. An N-linked (GlcNAc...) asparagine glycan is attached at asparagine 964. Glutamate 980 and histidine 1074 together coordinate heme b. An LRR 7 repeat occupies 1151 to 1175; sequence ALDLAAINIQRGRDHGIPPYHDYRV. Phosphotyrosine is present on tyrosine 1176. Disulfide bonds link cysteine 1177-cysteine 1234 and cysteine 1275-cysteine 1301. The N-linked (GlcNAc...) asparagine glycan is linked to asparagine 1178. Serine 1180 is modified (phosphoserine). Residues 1270-1291 form an LRR 8 repeat; that stretch reads LARILCDNADNITRVQSDVFRV. N-linked (GlcNAc...) asparagine glycans are attached at residues asparagine 1280, asparagine 1368, and asparagine 1425. The segment at 1315–1411 is required in homotrimerization; it reads CCEDCRTRGQ…QIKKLESRLS (97 aa). A disordered region spans residues 1342–1380; the sequence is YQEDKPTKKTRPRKIPSVGRQGEHLSNSTSAFSTRSDAS. Residues 1365 to 1380 show a composition bias toward polar residues; the sequence is HLSNSTSAFSTRSDAS. Residues 1413–1471 form the VWFC domain; sequence TECVDAGGESHANNTKWKKDACTICECKDGQVTCFVEACPPATCAVPVNIPGACCPVCL.

Belongs to the peroxidase family. XPO subfamily. As to quaternary structure, homotrimer; disulfide-linked. The homotrimer form is predominant. Homooligomer; disulfide-linked. Oligomerization occurs intracellularly before C-terminal proteolytic cleavage. Interacts with PXDNL; this interaction inhibits the peroxidase activity of PXDN. It depends on Ca(2+) as a cofactor. The cofactor is heme b. Glycosylated. Four sites are completely N-glycosylated (Asn-640, Asn-731, Asn-865 and Asn-1425), whereas the others are found partially glycosylated. In terms of processing, processed by FURIN and the proteolytic processing largely depends on the peroxidase activity of PXDN. The proteolytic cleavage occurs after intracellular homotrimerization and releases into the extracellular matrix a large, catalytically active fragment and a smaller fragment consisting primarily of the C-terminal VWFC domain. The processing enhances both peroxidase activity and sulfilimine cross-links formation. As to expression, expressed at higher levels in heart, lung, ovary, spleen, intestine and placenta, and at lower levels in liver, colon, pancreas, kidney, thymus, skeletal muscle and prostate. Expressed in tumors such as melanoma, breast cancer, ovarian cancer and glioblastoma. A shorter form probably lacking the signal sequence is found in testis and in EB1 cells undergoing p53/TP53-dependent apoptosis.

It is found in the secreted. The protein resides in the extracellular space. It localises to the extracellular matrix. The protein localises to the endoplasmic reticulum. Its subcellular location is the cell surface. It is found in the basement membrane. The enzyme catalyses L-lysyl-[collagen] + L-methionyl-[collagen] + H2O2 = [collagen]-L-lysyl-N-S-L-methionyl-[collagen] + 2 H2O + H(+). The catalysed reaction is bromide + H2O2 = hypobromite + H2O. It carries out the reaction L-lysyl-[collagen] + L-methionyl-[collagen] + hypobromite = [collagen]-L-lysyl-N-S-L-methionyl-[collagen] + bromide + H2O + H(+). It catalyses the reaction L-tyrosyl-[protein] + bromide + H2O2 + H(+) = 3-bromo-L-tyrosyl-[protein] + 2 H2O. The enzyme catalyses hypobromite + L-tyrosyl-[protein] + H(+) = 3-bromo-L-tyrosyl-[protein] + H2O. The hypobromous acid formation is activated by increasing nitrite concentrations and inhibited by increasing urate concentrations. Functionally, catalyzes the two-electron oxidation of bromide by hydrogen peroxide and generates hypobromite as a reactive intermediate which mediates the formation of sulfilimine cross-links between methionine and hydroxylysine residues within an uncross-linked collagen IV/COL4A1 NC1 hexamer. In turns, directly contributes to the collagen IV network-dependent fibronectin/FN and laminin assembly, which is required for full extracellular matrix (ECM)-mediated signaling. Thus, sulfilimine cross-links are essential for growth factor-induced cell proliferation and survival in endothelial cells, an event essential to basement membrane integrity. In addition, through the bromide oxidation, may promote tubulogenesis and induce angiogenesis through ERK1/2, Akt, and FAK pathways. Moreover brominates alpha2 collagen IV chain/COL4A2 at 'Tyr-1485' and leads to bromine enrichment of the basement membranes. In vitro, can also catalyze the two-electron oxidation of thiocyanate and iodide and these two substrates could effectively compete with bromide and thus inhibit the formation of sulfilimine bonds. Binds laminins. May play a role in the organization of eyeball structure and lens development during eye development. In Homo sapiens (Human), this protein is Peroxidasin homolog.